A 984-amino-acid polypeptide reads, in one-letter code: MALDYLLLLLLASAVAAMEETLMDTRTATAELGWTANPASGWEEVSGYDENLNTIRTYQVCNVFEPNQNNWLLTTFINRRGAHRIYTEMRFTVRDCSSLPNVPGSCKETFNLYYYETDSVIATKKSAFWSEAPYLKVDTIAADESFSQVDFGGRLMKVNTEVRSFGPLTRNGFYLAFQDYGACMSLLSVRVFFKKCPSIVQNFAVFPETMTGAESTSLVIARGTCIPNAEEVDVPIKLYCNGDGEWMVPIGRCTCKPGYEPENSVACKACPAGTFKASQEAEGCSHCPSNSRSPAEASPICTCRTGYYRADFDPPEVACTSVPSGPRNVISIVNETSIILEWHPPRETGGRDDVTYNIICKKCRADRRSCSRCDDNVEFVPRQLGLTECRVSISSLWAHTPYTFDIQAINGVSSKSPFPPQHVSVNITTNQAAPSTVPIMHQVSATMRSITLSWPQPEQPNGIILDYEIRYYEKEHNEFNSSMARSQTNTARIDGLRPGMVYVVQVRARTVAGYGKFSGKMCFQTLTDDDYKSELREQLPLIAGSAAAGVVFVVSLVAISIVCSRKRAYSKEAVYSDKLQHYSTGRGSPGMKIYIDPFTYEDPNEAVREFAKEIDVSFVKIEEVIGAGEFGEVYKGRLKLPGKREIYVAIKTLKAGYSEKQRRDFLSEASIMGQFDHPNIIRLEGVVTKSRPVMIITEFMENGALDSFLRQNDGQFTVIQLVGMLRGIAAGMKYLAEMNYVHRDLAARNILVNSNLVCKVSDFGLSRYLQDDTSDPTYTSSLGGKIPVRWTAPEAIAYRKFTSASDVWSYGIVMWEVMSFGERPYWDMSNQDVINAIEQDYRLPPPMDCPAALHQLMLDCWQKDRNSRPRFAEIVNTLDKMIRNPASLKTVATITAVPSQPLLDRSIPDFTAFTTVDDWLSAIKMVQYRDSFLTAGFTSLQLVTQMTSEDLLRIGITLAGHQKKILNSIHSMRVQISQSPTAMA.

The N-terminal stretch at 1 to 17 (MALDYLLLLLLASAVAA) is a signal peptide. Topologically, residues 18-540 (MEETLMDTRT…YKSELREQLP (523 aa)) are extracellular. The Eph LBD domain occupies 19 to 201 (EETLMDTRTA…FFKKCPSIVQ (183 aa)). Fibronectin type-III domains are found at residues 322–432 (VPSG…TNQA) and 433–528 (APST…TLTD). N-linked (GlcNAc...) asparagine glycans are attached at residues asparagine 334, asparagine 426, and asparagine 480. The chain crosses the membrane as a helical span at residues 541 to 563 (LIAGSAAAGVVFVVSLVAISIVC). At 564-984 (SRKRAYSKEA…QISQSPTAMA (421 aa)) the chain is on the cytoplasmic side. Tyrosine 600 is subject to Phosphotyrosine. A Protein kinase domain is found at 619 to 882 (VKIEEVIGAG…EIVNTLDKMI (264 aa)). ATP is bound by residues 625–633 (IGAGEFGEV) and lysine 651. Aspartate 744 serves as the catalytic Proton acceptor. One can recognise an SAM domain in the interval 911 to 975 (TAFTTVDDWL…LNSIHSMRVQ (65 aa)). Tyrosine 928 is subject to Phosphotyrosine; by autocatalysis. The PDZ-binding motif lies at 982–984 (AMA).

Belongs to the protein kinase superfamily. Tyr protein kinase family. Ephrin receptor subfamily. In terms of assembly, heterotetramer upon binding of the ligand. The heterotetramer is composed of an ephrin dimer and a receptor dimer. Oligomerization is probably required to induce biological responses. Interacts with EPHB6; transphosphorylates EPHB6 to form an active signaling complex. Interacts with PICK1. Interacts (through Tyr-594) with NCK1 (via SH2 domain); activates the JUN cascade to regulate cell adhesion. The ligand-activated form interacts (through Tyr-928) with GRB7 and GRB10 (via SH2 domains). The ligand-activated form interacts (residues within the catalytic domain) with GRB2 (via SH2 domain). Interacts with GRB2, SHC1 and SRC; activates the MAPK/ERK cascade to regulate cell migration. Interacts with CBL; regulates receptor degradation through ubiquitination. Interacts with ACP1. In terms of processing, phosphorylated. Autophosphorylation is stimulated by the ligand EFNB1. Required for interaction with SH2 domain-containing interactors, for activation of the MAPK/ERK and JUN signaling cascades and for ubiquitination by CBL. Ubiquitinated; (EFNB1)ligand-induced poly- and/or multi-ubiquitination by CBL is regulated by SRC and leads to lysosomal degradation. In terms of tissue distribution, preferentially expressed in brain.

The protein resides in the cell membrane. It is found in the early endosome membrane. The protein localises to the cell projection. It localises to the dendrite. The catalysed reaction is L-tyrosyl-[protein] + ATP = O-phospho-L-tyrosyl-[protein] + ADP + H(+). Receptor tyrosine kinase which binds promiscuously transmembrane ephrin-B family ligands residing on adjacent cells, leading to contact-dependent bidirectional signaling into neighboring cells. The signaling pathway downstream of the receptor is referred to as forward signaling while the signaling pathway downstream of the ephrin ligand is referred to as reverse signaling. Cognate/functional ephrin ligands for this receptor include EFNB1, EFNB2 and EFNB3. During nervous system development, regulates retinal axon guidance redirecting ipsilaterally ventrotemporal retinal ganglion cells axons at the optic chiasm midline. This probably requires repulsive interaction with EFNB2. In the adult nervous system together with EFNB3, regulates chemotaxis, proliferation and polarity of the hippocampus neural progenitors. In addition to its role in axon guidance also plays an important redundant role with other ephrin-B receptors in development and maturation of dendritic spines and synapse formation. May also regulate angiogenesis. More generally, may play a role in targeted cell migration and adhesion. Upon activation by EFNB1 and probably other ephrin-B ligands activates the MAPK/ERK and the JNK signaling cascades to regulate cell migration and adhesion respectively. Involved in the maintenance of the pool of satellite cells (muscle stem cells) by promoting their self-renewal and reducing their activation and differentiation. The polypeptide is Ephrin type-B receptor 1 (EPHB1) (Homo sapiens (Human)).